The primary structure comprises 26 residues: Phospholipase A2 homolog A1 (26 aa).

In terms of processing, contains 7 disulfide bonds. As to expression, expressed by the venom gland.

It is found in the secreted. The polypeptide is Phospholipase A2 homolog A1 (Micrurus pyrrhocryptus (Coral snake)).